A 182-amino-acid chain; its full sequence is MVKALLVGSKVLIPNVDESRYIYSNGFYGKAIGISKPKDPKDIIRPLELSLIESVYLAKKGLIKVIDKNGEVLEYEKLYEYSSKIINKFDIMYRVYEDLREKGFIVRSGVKYGADFAVYTLGPGLEHAPYVVIAVDIDEEITPHELLSFGRVSHSTRKRLVLALVDRKSESVRYIMFKWVKM.

Active-site residues include Tyr119, His127, and Lys158.

Belongs to the tRNA-intron endonuclease family. Archaeal short subfamily. Homotetramer; although the tetramer contains four active sites, only two participate in the cleavage. Therefore, it should be considered as a dimer of dimers.

The enzyme catalyses pretRNA = a 3'-half-tRNA molecule with a 5'-OH end + a 5'-half-tRNA molecule with a 2',3'-cyclic phosphate end + an intron with a 2',3'-cyclic phosphate and a 5'-hydroxyl terminus.. Functionally, endonuclease that removes tRNA introns. Cleaves pre-tRNA at the 5'- and 3'-splice sites to release the intron. The products are an intron and two tRNA half-molecules bearing 2',3' cyclic phosphate and 5'-OH termini. Recognizes a pseudosymmetric substrate in which 2 bulged loops of 3 bases are separated by a stem of 4 bp. This chain is tRNA-splicing endonuclease, found in Saccharolobus islandicus (strain L.S.2.15 / Lassen #1) (Sulfolobus islandicus).